Here is a 526-residue protein sequence, read N- to C-terminus: GMP synthase [glutamine-hydrolyzing] (526 aa).

A Glutamine amidotransferase type-1 domain is found at 9–208 (RILILDFGSQ…VMDICGCETL (200 aa)). Cysteine 86 functions as the Nucleophile in the catalytic mechanism. Active-site residues include histidine 182 and glutamate 184. The region spanning 209 to 401 (WTSSSIIEDA…LGLPYEMLYR (193 aa)) is the GMPS ATP-PPase domain. 236-242 (SGGVDSS) serves as a coordination point for ATP.

As to quaternary structure, homodimer.

The enzyme catalyses XMP + L-glutamine + ATP + H2O = GMP + L-glutamate + AMP + diphosphate + 2 H(+). It participates in purine metabolism; GMP biosynthesis; GMP from XMP (L-Gln route): step 1/1. Functionally, catalyzes the synthesis of GMP from XMP. The chain is GMP synthase [glutamine-hydrolyzing] from Psychromonas ingrahamii (strain DSM 17664 / CCUG 51855 / 37).